A 305-amino-acid polypeptide reads, in one-letter code: GMP synthase [glutamine-hydrolyzing] subunit B (305 aa).

One can recognise a GMPS ATP-PPase domain in the interval 2–184 (VKPEKFIPKA…LKLPDEICER (183 aa)). 29–35 (SGGVDSS) is an ATP binding site.

Heterodimer composed of a glutamine amidotransferase subunit (A) and a GMP-binding subunit (B).

The catalysed reaction is XMP + L-glutamine + ATP + H2O = GMP + L-glutamate + AMP + diphosphate + 2 H(+). The protein operates within purine metabolism; GMP biosynthesis; GMP from XMP (L-Gln route): step 1/1. Its function is as follows. Catalyzes the synthesis of GMP from XMP. The polypeptide is GMP synthase [glutamine-hydrolyzing] subunit B (Methanosarcina barkeri (strain Fusaro / DSM 804)).